We begin with the raw amino-acid sequence, 141 residues long: Large ribosomal subunit protein uL11 (141 aa).

It belongs to the universal ribosomal protein uL11 family. Part of the ribosomal stalk of the 50S ribosomal subunit. Interacts with L10 and the large rRNA to form the base of the stalk. L10 forms an elongated spine to which L12 dimers bind in a sequential fashion forming a multimeric L10(L12)X complex. Post-translationally, one or more lysine residues are methylated.

In terms of biological role, forms part of the ribosomal stalk which helps the ribosome interact with GTP-bound translation factors. This chain is Large ribosomal subunit protein uL11, found in Prochlorococcus marinus (strain NATL1A).